The chain runs to 321 residues: Tyrosine recombinase XerC (321 aa).

The Core-binding (CB) domain occupies 16–107; sequence PSIAQEMTRW…GLRSFGRFLE (92 aa). In terms of domain architecture, Tyr recombinase spans 128 to 315; the sequence is SLPKPLPMAS…DSERLLEVYA (188 aa). Residues Arg-173, Lys-199, His-267, Arg-270, and His-293 contribute to the active site. The active-site O-(3'-phospho-DNA)-tyrosine intermediate is Tyr-302.

Belongs to the 'phage' integrase family. XerC subfamily. Forms a cyclic heterotetrameric complex composed of two molecules of XerC and two molecules of XerD.

The protein localises to the cytoplasm. Functionally, site-specific tyrosine recombinase, which acts by catalyzing the cutting and rejoining of the recombining DNA molecules. The XerC-XerD complex is essential to convert dimers of the bacterial chromosome into monomers to permit their segregation at cell division. It also contributes to the segregational stability of plasmids. The polypeptide is Tyrosine recombinase XerC (Bradyrhizobium diazoefficiens (strain JCM 10833 / BCRC 13528 / IAM 13628 / NBRC 14792 / USDA 110)).